Here is a 527-residue protein sequence, read N- to C-terminus: N-acetylglutamate synthase, mitochondrial (527 aa).

The transit peptide at 1–39 (MAKVNSGSSGCRAMVMAGQFWTKPFALSSQRSGPHRRSA) directs the protein to the mitochondrion. The tract at residues 28–65 (SSQRSGPHRRSAAEVNRRMSSSRTAGHGSKTPLWSQQE) is disordered. The tract at residues 40–83 (AEVNRRMSSSRTAGHGSKTPLWSQQESYNHSSLGERSAWSNRTL) is may stabilize the oligomeric structure. Residues 40 to 361 (AEVNRRMSSS…SGTLFKNGDP (322 aa)) are amino-acid kinase domain (AAK). One can recognise an N-acetyltransferase domain in the interval 360 to 511 (DPIRRYSSLE…FAKSHPDSFC (152 aa)). Residues K386, K429, and 459 to 464 (RSRTTN) each bind substrate.

The protein belongs to the acetyltransferase family. Homodimer. Homotetramer.

It localises to the mitochondrion matrix. The enzyme catalyses L-glutamate + acetyl-CoA = N-acetyl-L-glutamate + CoA + H(+). Its activity is regulated as follows. Inhibited by L-arginine. Its function is as follows. Plays a role in the regulation of ureagenesis by producing the essential cofactor N-acetylglutamate (NAG), thus modulating carbamoylphosphate synthase I (cps1) activity. This Danio rerio (Zebrafish) protein is N-acetylglutamate synthase, mitochondrial.